The following is a 222-amino-acid chain: Eukaryotic translation initiation factor 4E-1 (222 aa).

Residues 1-22 (MVDEVEKPASLEESKTNTREVE) show a composition bias toward basic and acidic residues. The interval 1-37 (MVDEVEKPASLEESKTNTREVEEGAEEVIESDDTMSS) is disordered. Residues 23 to 33 (EGAEEVIESDD) show a composition bias toward acidic residues. EIF4G-binding regions lie at residues 47–50 (HPLE) and 57–93 (FDNPSGKSKQAAWGSSIRPIYTFSTVEDFWSVYNNIH). Residues 65-70 (KQAAWG), Lys97, and 115-116 (WE) contribute to the mRNA site. Cys120 and Cys158 are oxidised to a cystine. Positions 141–150 (YTLLAMIGEQ) are EIF4G-binding. Residues 165-170 (RVRQEK) and 210-214 (KKLDR) each bind mRNA.

Belongs to the eukaryotic initiation factor 4E family. In terms of assembly, EIF4F is a multi-subunit complex, the composition of which varies with external and internal environmental conditions. It is composed of at least EIF4A, EIF4E and EIF4G. EIF4E is also known to interact with other partners. In higher plants two isoforms of EIF4F have been identified, named isoform EIF4F and isoform EIF(iso)4F. Isoform EIF4F has subunits p220 and p26, whereas isoform EIF(iso)4F has subunits p82 and p28. According to the redox status, the Cys-120-Cys-158 disulfide bridge may have a role in regulating protein function by affecting its ability to bind capped mRNA. Expressed ubiquitously in seedlings, roots, leaves, sepals, petals, anthers and dehisced pollen, with highest levels in pollen, maturing anthers and roots. Strongly expressed in susceptible plants but not in resistant ones.

It is found in the nucleus. Its subcellular location is the cytoplasm. Component of the protein complex eIF4F, which is involved in the recognition of the mRNA cap, ATP-dependent unwinding of 5'-terminal secondary structure and recruitment of mRNA to the ribosome. Recognizes and binds the 7-methylguanosine-containing mRNA cap during an early step in the initiation of protein synthesis and facilitates ribosome binding by inducing the unwinding of the mRNAs secondary structures. Key component of recessive resistance to potyviruses. Its function is as follows. (Microbial infection) Susceptibility host factor required for viral infection (e.g. potato virus Y (PVY) and pepper mottle virus (PepMoV)) by recruiting viral RNAs to the host ribosomal complex via an interaction with viral genome-linked protein (VPg). The chain is Eukaryotic translation initiation factor 4E-1 from Nicotiana tabacum (Common tobacco).